We begin with the raw amino-acid sequence, 843 residues long: DNA gyrase subunit A (843 aa).

In terms of domain architecture, Topo IIA-type catalytic spans 61-528; it reads LPDVRDGLKP…ESSTFNAEDL (468 aa). Tyr149 (O-(5'-phospho-DNA)-tyrosine intermediate) is an active-site residue. Positions 555–561 match the GyrA-box motif; that stretch reads QKRGGKG.

Belongs to the type II topoisomerase GyrA/ParC subunit family. Heterotetramer, composed of two GyrA and two GyrB chains. In the heterotetramer, GyrA contains the active site tyrosine that forms a transient covalent intermediate with DNA, while GyrB binds cofactors and catalyzes ATP hydrolysis.

The protein resides in the cytoplasm. It carries out the reaction ATP-dependent breakage, passage and rejoining of double-stranded DNA.. In terms of biological role, a type II topoisomerase that negatively supercoils closed circular double-stranded (ds) DNA in an ATP-dependent manner to modulate DNA topology and maintain chromosomes in an underwound state. Negative supercoiling favors strand separation, and DNA replication, transcription, recombination and repair, all of which involve strand separation. Also able to catalyze the interconversion of other topological isomers of dsDNA rings, including catenanes and knotted rings. Type II topoisomerases break and join 2 DNA strands simultaneously in an ATP-dependent manner. The polypeptide is DNA gyrase subunit A (Leptospira biflexa serovar Patoc (strain Patoc 1 / Ames)).